The following is a 301-amino-acid chain: NADH-cytochrome b5 reductase 3 (301 aa).

Gly2 carries the N-myristoyl glycine lipid modification. Residues 40-152 (DIKYPLRLID…RGPNGLLVYQ (113 aa)) enclose the FAD-binding FR-type domain. Lys42 bears the N6-acetyllysine mark. At Tyr43 the chain carries Phosphotyrosine. Residue Lys50 is modified to N6-acetyllysine. FAD-binding residues include Arg92, Pro93, Tyr94, Val109, Lys111, and Phe114. Lys120 carries the post-translational modification N6-acetyllysine. Residues Lys126, Met127, Ser128, and Thr185 each contribute to the FAD site.

This sequence belongs to the flavoprotein pyridine nucleotide cytochrome reductase family. In terms of assembly, component of a complex composed of cytochrome b5, NADH-cytochrome b5 reductase (CYB5R3) and MTARC2. Interacts with MTLN; the interaction is required to maintain cellular lipid composition and leads to stimulation of mitochondrial respiratory complex I activity. FAD is required as a cofactor.

The protein resides in the endoplasmic reticulum membrane. It is found in the mitochondrion outer membrane. The enzyme catalyses 2 Fe(III)-[cytochrome b5] + NADH = 2 Fe(II)-[cytochrome b5] + NAD(+) + H(+). In terms of biological role, catalyzes the reduction of two molecules of cytochrome b5 using NADH as the electron donor. This is NADH-cytochrome b5 reductase 3 from Mus musculus (Mouse).